The chain runs to 546 residues: Probable ganciclovir kinase (546 aa).

Residues 1–11 (MEQLKTPQNQK) are compositionally biased toward polar residues. Residues 1-29 (MEQLKTPQNQKTRPRNMLPKKKGKELKKR) form a disordered region. The segment covering 12-29 (TRPRNMLPKKKGKELKKR) has biased composition (basic residues). Residues 185–193 (LGSGSYGMV) and Lys202 contribute to the ATP site. Asp297 (proton acceptor) is an active-site residue.

It belongs to the protein kinase superfamily. Tyr protein kinase family. HCMV ganciclovir subfamily.

Its function is as follows. Phosphorylates the antiviral nucleoside analog ganciclovir. The chain is Probable ganciclovir kinase (U69) from Human herpesvirus 7 (strain JI) (HHV-7).